Here is a 159-residue protein sequence, read N- to C-terminus: Cyclic pyranopterin monophosphate synthase (159 aa).

Substrate contacts are provided by residues 75–77 and 113–114; these read MCH and ME. Residue aspartate 128 is part of the active site.

It belongs to the MoaC family. As to quaternary structure, homohexamer; trimer of dimers.

It catalyses the reaction (8S)-3',8-cyclo-7,8-dihydroguanosine 5'-triphosphate = cyclic pyranopterin phosphate + diphosphate. Its pathway is cofactor biosynthesis; molybdopterin biosynthesis. Catalyzes the conversion of (8S)-3',8-cyclo-7,8-dihydroguanosine 5'-triphosphate to cyclic pyranopterin monophosphate (cPMP). The protein is Cyclic pyranopterin monophosphate synthase of Desulfatibacillum aliphaticivorans.